The chain runs to 61 residues: Small ribosomal subunit protein uS14 (61 aa).

Residues C24, C27, C40, and C43 each coordinate Zn(2+).

This sequence belongs to the universal ribosomal protein uS14 family. Zinc-binding uS14 subfamily. In terms of assembly, part of the 30S ribosomal subunit. Contacts proteins S3 and S10. Zn(2+) serves as cofactor.

Functionally, binds 16S rRNA, required for the assembly of 30S particles and may also be responsible for determining the conformation of the 16S rRNA at the A site. The protein is Small ribosomal subunit protein uS14 of Mycobacterium avium (strain 104).